A 465-amino-acid chain; its full sequence is Gamma-aminobutyric acid receptor subunit rho-2 (465 aa).

A signal peptide spans 1–20 (MPYFSRLILFLFCLVVLVES). The Extracellular segment spans residues 21-260 (RKPKKRRWTG…LYINFTLRRH (240 aa)). Arginine 105 lines the 4-aminobutanoate pocket. N-linked (GlcNAc...) asparagine glycosylation is present at asparagine 120. Serine 169 serves as a coordination point for 4-aminobutanoate. Cysteine 178 and cysteine 192 are disulfide-bonded. Glutamate 197 lines the 4-aminobutanoate pocket. A glycan (N-linked (GlcNAc...) asparagine) is linked at asparagine 254. Residues 261–281 (IFFFLLQTYFPATLMVMLSWV) form a helical membrane-spanning segment. Topologically, residues 282–293 (SFWIDRRAVPAR) are cytoplasmic. Residues 294–314 (VSLGITTVLTMSTIITGVNAS) form a helical membrane-spanning segment. The Extracellular portion of the chain corresponds to 315–325 (MPRVSYIKAVD). Residues 326–346 (IYLWVSFVFVFLSVLEYAAVN) traverse the membrane as a helical segment. Over 347–444 (YLTTVQERKE…FQNTHAIDKY (98 aa)) the chain is Cytoplasmic. The helical transmembrane segment at 445 to 465 (SRLIFPASYIFFNLIYWSVFA) threads the bilayer.

It belongs to the ligand-gated ion channel (TC 1.A.9) family. Gamma-aminobutyric acid receptor (TC 1.A.9.5) subfamily. GABRR2 sub-subfamily. Three rho subunits (rho-1/GBRR1, rho-2/GBRR2 and rho-3/GBRR3) coassemble either to form functional homopentamers or heteropentamers. Rho-2 is unable to form a functional homopentamer. Interacts with SQSTM1.

The protein localises to the postsynaptic cell membrane. Its subcellular location is the cell membrane. The enzyme catalyses chloride(in) = chloride(out). Rho subunit of the pentameric ligand-gated chloride channels responsible for mediating the effects of gamma-aminobutyric acid (GABA), the major inhibitory neurotransmitter in the brain. Rho-containing GABA-gated chloride channels are a subclass of GABA(A) receptors (GABAARs) entirely composed of rho subunits, where GABA molecules bind at the rho intersubunit interfaces. When activated by GABA, rho-GABAARs selectively allow the flow of chloride anions across the cell membrane down their electrochemical gradient. Rho-2 GABAARs may contribute to the regulation of glial development in the cerebellum by controlling extrasynaptic transmission. Rho-2 GABAARs are also involved in neuronal tonic (extrasynaptic) and phasic (synaptic) transmission in the Purkinje neurons of the cerebellum. Rho-2 GABAARs expressed in retina may play a role in retinal neurotransmission. This Bos taurus (Bovine) protein is Gamma-aminobutyric acid receptor subunit rho-2 (GABRR2).